A 208-amino-acid chain; its full sequence is MKNIHCINHPLIEHKLGILRAKETKPFQFRMLIDEISSFLLFEASKDFSLKEIEISTLIQKTTVKKLDEKIMICPILRAALGMLESVFKMIPDASVGFLGFVRNEETLKADFYFQKLPKDAKKRTAIVIDPMFATGGTAIEACNFLKSQGVKKIKFISILAAPQGLKKFSQMHDDVEVFVACIDEGLNEKGYIIPGLGDAGDRVFNTL.

Residues Arg-78, Arg-103, and 130–138 (DPMFATGGT) each bind 5-phospho-alpha-D-ribose 1-diphosphate. Residues Ile-193 and 198–200 (GDA) each bind uracil. Residue Asp-199 coordinates 5-phospho-alpha-D-ribose 1-diphosphate.

The protein belongs to the UPRTase family. Mg(2+) is required as a cofactor.

The catalysed reaction is UMP + diphosphate = 5-phospho-alpha-D-ribose 1-diphosphate + uracil. Its pathway is pyrimidine metabolism; UMP biosynthesis via salvage pathway; UMP from uracil: step 1/1. Its activity is regulated as follows. Allosterically activated by GTP. In terms of biological role, catalyzes the conversion of uracil and 5-phospho-alpha-D-ribose 1-diphosphate (PRPP) to UMP and diphosphate. The sequence is that of Uracil phosphoribosyltransferase from Campylobacter jejuni (strain RM1221).